The chain runs to 252 residues: ATP synthase subunit a (252 aa).

A run of 6 helical transmembrane segments spans residues 29–49 (FTNV…FLFI), 87–107 (FFPL…IGLF), 117–137 (IMIT…CGFY), 146–166 (LFVP…IEVI), 196–216 (FIVS…LPLI), and 219–239 (VAIT…FTVL).

It belongs to the ATPase A chain family. F-type ATPases have 2 components, CF(1) - the catalytic core - and CF(0) - the membrane proton channel. CF(1) has five subunits: alpha(3), beta(3), gamma(1), delta(1), epsilon(1). CF(0) has three main subunits: a(1), b(2) and c(9-12). The alpha and beta chains form an alternating ring which encloses part of the gamma chain. CF(1) is attached to CF(0) by a central stalk formed by the gamma and epsilon chains, while a peripheral stalk is formed by the delta and b chains.

It localises to the cell inner membrane. Key component of the proton channel; it plays a direct role in the translocation of protons across the membrane. The protein is ATP synthase subunit a of Bartonella bacilliformis (strain ATCC 35685 / KC583 / Herrer 020/F12,63).